Reading from the N-terminus, the 195-residue chain is MTKIIGLTGGIASGKSTVTKIIRESGFKVIDADQVVHKLQAKGGKLYQALLEWLGPEILDADGELDRPKLSQMIFANPDNMKTSARLQNSIIRQELACQRDQLKQTEEIFFMDIPLLIEEKYIKWFDEIWLVFVDKEKQLQRLMARNNYSREEAELRLSHQMPLTDKKSFASLIIDNNGDLITLKEQILDALQRL.

In terms of domain architecture, DPCK spans 4 to 195 (IIGLTGGIAS…EQILDALQRL (192 aa)). 12-17 (ASGKST) contributes to the ATP binding site.

This sequence belongs to the CoaE family.

It is found in the cytoplasm. The catalysed reaction is 3'-dephospho-CoA + ATP = ADP + CoA + H(+). It functions in the pathway cofactor biosynthesis; coenzyme A biosynthesis; CoA from (R)-pantothenate: step 5/5. Catalyzes the phosphorylation of the 3'-hydroxyl group of dephosphocoenzyme A to form coenzyme A. In Streptococcus agalactiae serotype Ia (strain ATCC 27591 / A909 / CDC SS700), this protein is Dephospho-CoA kinase.